Reading from the N-terminus, the 72-residue chain is Translation initiation factor IF-1 1 (72 aa).

The region spanning 1–72 is the S1-like domain; it reads MSKDDVIQMQ…TRARIVFRSK (72 aa).

It belongs to the IF-1 family. Component of the 30S ribosomal translation pre-initiation complex which assembles on the 30S ribosome in the order IF-2 and IF-3, IF-1 and N-formylmethionyl-tRNA(fMet); mRNA recruitment can occur at any time during PIC assembly.

It localises to the cytoplasm. Functionally, one of the essential components for the initiation of protein synthesis. Stabilizes the binding of IF-2 and IF-3 on the 30S subunit to which N-formylmethionyl-tRNA(fMet) subsequently binds. Helps modulate mRNA selection, yielding the 30S pre-initiation complex (PIC). Upon addition of the 50S ribosomal subunit IF-1, IF-2 and IF-3 are released leaving the mature 70S translation initiation complex. This Bordetella avium (strain 197N) protein is Translation initiation factor IF-1 1.